The following is a 307-amino-acid chain: MTKTGSKGGNLRDKLDGNELDLSLSDLNEVPVKELAALPKATVLDLSCNKLSTLPSDFCGLTHLVKLDLSKNKLQQLPADFGRLVNLQHLDLLNNRLVTLPVSFAQLKNLKWLDLKDNPLDPVLAKVAGDCLDEKQCKQCANKVLQHMKAVQADQERERQRRLEVEREAEKKREAKQQAKEAKERELRKREKAEEKERRRKEYDAQKASKREQEKKPKKETNQAPKSKSGSRPRKPPPRKHNRSWAVLKGLLLLLLLCVAGGLVVCRVTGLQQQPLCTSVNAIYDNAVQGLRHHEILQWVLQTDSQQ.

M1 bears the N-acetylmethionine mark. T2 bears the N-acetylthreonine; in Leucine-rich repeat-containing protein 59, N-terminally processed mark. Topologically, residues T2–S244 are cytoplasmic. 5 LRR repeats span residues N10–P31, K40–T62, H63–L84, N86–L107, and N109–A128. 2 positions are modified to phosphoserine: S23 and S25. An N6-succinyllysine modification is found at K73. K135 carries the N6-acetyllysine modification. Residues M148–K216 adopt a coiled-coil conformation. The tract at residues A150 to N242 is disordered. A compositionally biased stretch (basic and acidic residues) spans D154–T221. Residues S229 to N242 are compositionally biased toward basic residues. The helical transmembrane segment at W245–V265 threads the bilayer. Residues C266–Q307 lie on the Lumenal side of the membrane.

As to quaternary structure, can form homodimers. Interacts with SGO1. Interacts with FGF1.

Its subcellular location is the microsome membrane. It localises to the endoplasmic reticulum membrane. It is found in the nucleus envelope. Functionally, required for nuclear import of FGF1, but not that of FGF2. Might regulate nuclear import of exogenous FGF1 by facilitating interaction with the nuclear import machinery and by transporting cytosolic FGF1 to, and possibly through, the nuclear pores. The sequence is that of Leucine-rich repeat-containing protein 59 (Lrrc59) from Rattus norvegicus (Rat).